Consider the following 332-residue polypeptide: Glycerol-3-phosphate dehydrogenase [NAD(P)+] (332 aa).

Positions 13, 34, and 108 each coordinate NADPH. The sn-glycerol 3-phosphate site is built by K108, G136, and S138. Residue A140 coordinates NADPH. The sn-glycerol 3-phosphate site is built by K191, D244, S254, R255, and N256. K191 (proton acceptor) is an active-site residue. Residue R255 coordinates NADPH. 2 residues coordinate NADPH: V279 and E281.

Belongs to the NAD-dependent glycerol-3-phosphate dehydrogenase family.

It is found in the cytoplasm. It catalyses the reaction sn-glycerol 3-phosphate + NAD(+) = dihydroxyacetone phosphate + NADH + H(+). The enzyme catalyses sn-glycerol 3-phosphate + NADP(+) = dihydroxyacetone phosphate + NADPH + H(+). Its pathway is membrane lipid metabolism; glycerophospholipid metabolism. In terms of biological role, catalyzes the reduction of the glycolytic intermediate dihydroxyacetone phosphate (DHAP) to sn-glycerol 3-phosphate (G3P), the key precursor for phospholipid synthesis. In Francisella philomiragia subsp. philomiragia (strain ATCC 25017 / CCUG 19701 / FSC 153 / O#319-036), this protein is Glycerol-3-phosphate dehydrogenase [NAD(P)+].